A 187-amino-acid chain; its full sequence is Elongation factor P (187 aa).

The protein belongs to the elongation factor P family.

It is found in the cytoplasm. Its pathway is protein biosynthesis; polypeptide chain elongation. Involved in peptide bond synthesis. Stimulates efficient translation and peptide-bond synthesis on native or reconstituted 70S ribosomes in vitro. Probably functions indirectly by altering the affinity of the ribosome for aminoacyl-tRNA, thus increasing their reactivity as acceptors for peptidyl transferase. The polypeptide is Elongation factor P (Rhizorhabdus wittichii (strain DSM 6014 / CCUG 31198 / JCM 15750 / NBRC 105917 / EY 4224 / RW1) (Sphingomonas wittichii)).